The primary structure comprises 195 residues: Nuclear transcription factor Y subunit C-10 (195 aa).

Residues 1–24 (MRRPKSSHVRMEPVAPRSHNTMPM) are disordered.

Belongs to the NFYC/HAP5 subunit family. In terms of assembly, heterotrimeric transcription factor composed of three components, NF-YA, NF-YB and NF-YC. NF-YB and NF-YC must interact and dimerize for NF-YA association and DNA binding.

It is found in the nucleus. Stimulates the transcription of various genes by recognizing and binding to a CCAAT motif in promoters. This is Nuclear transcription factor Y subunit C-10 (NFYC10) from Arabidopsis thaliana (Mouse-ear cress).